A 359-amino-acid chain; its full sequence is Guanine nucleotide-binding protein subunit alpha-11 (359 aa).

Residues cysteine 9 and cysteine 10 are each lipidated (S-palmitoyl cysteine). The G-alpha domain occupies 38–359 (RELKLLLLGT…QLNLKEYNLV (322 aa)). Residues 41 to 54 (KLLLLGTGESGKST) form a G1 motif region. Residues 46-53 (GTGESGKS) and 180-183 (LRVR) contribute to the GTP site. Residue serine 53 participates in Mg(2+) binding. A G2 motif region spans residues 178-186 (DVLRVRVPT). Threonine 186 provides a ligand contact to Mg(2+). The tract at residues 201-210 (FRMVDVGGQR) is G3 motif. A Deamidated glutamine; by Photorhabdus PAU_02230 modification is found at glutamine 209. The G4 motif stretch occupies residues 270–277 (ILFLNKKD). Residues 274–277 (NKKD) and alanine 331 each bind GTP. The segment at 329–334 (TCATDT) is G5 motif.

This sequence belongs to the G-alpha family. G(q) subfamily. In terms of assembly, g proteins are composed of 3 units; alpha, beta and gamma. The alpha chain contains the guanine nucleotide binding site. Interacts with RGS22. Interacts with NTSR1. As to quaternary structure, (Microbial infection) Interacts with human cytomegalovirus (HHV-5) US28. (Microbial infection) Deamidated at Gln-209 by Photorhabdus asymbiotica toxin PAU_02230, blocking GTP hydrolysis of heterotrimeric GNAQ or GNA11 and G-alphai (GNAI1, GNAI2 or GNAI3) proteins, thereby activating RhoA. In terms of tissue distribution, expressed in testis.

It is found in the cell membrane. It localises to the cytoplasm. The catalysed reaction is GTP + H2O = GDP + phosphate + H(+). Functionally, guanine nucleotide-binding proteins (G proteins) function as transducers downstream of G protein-coupled receptors (GPCRs) in numerous signaling cascades. The alpha chain contains the guanine nucleotide binding site and alternates between an active, GTP-bound state and an inactive, GDP-bound state. Signaling by an activated GPCR promotes GDP release and GTP binding. The alpha subunit has a low GTPase activity that converts bound GTP to GDP, thereby terminating the signal. Both GDP release and GTP hydrolysis are modulated by numerous regulatory proteins. Signaling is mediated via phospholipase C-beta-dependent inositol lipid hydrolysis for signal propagation: activates phospholipase C-beta: following GPCR activation, GNA11 activates PLC-beta (PLCB1, PLCB2, PLCB3 or PLCB4), leading to production of diacylglycerol (DAG) and inositol 1,4,5-trisphosphate (IP3). Transduces FFAR4 signaling in response to long-chain fatty acids (LCFAs). Together with GNAQ, required for heart development. In the respiratory epithelium, transmits OXGR1-dependent signals that lead to downstream intracellular Ca(2+) release and mucocilliary clearance of airborne pathogens. The sequence is that of Guanine nucleotide-binding protein subunit alpha-11 (GNA11) from Homo sapiens (Human).